We begin with the raw amino-acid sequence, 453 residues long: MAKAKRMYGCTECGATFPKWAGQCADCGAWNTLVETVVEAAPSGSGRGGWAGQQANLKTLAEVSVEEMPRFTTGSTELDRVLGGGLVDGSVVLIGGDPGIGKSTILLQTLCNLASRVPALYVTGEESQQQVAMRARRLSLPEDKLKVMTETSIETIIATARQEQPRVMVIDSIQTIFTEQLQSAPGGVAQVRESAAMLVRYAKQSGTAIFLVGHVTKEGALAGPRVLEHMVDTVLYFEGESDGRLRLLRAVKNRFGAVNELGVFGMTDKGLKEVSNPSAIFLTRAQEAVPGSVVMATWEGSRPMLVEVQALVDTSHLANPRRVTLGLDQNRLAMLLAVLHRHGGIPTYDQDVFLNVVGGVKVLETASDLALMAAVMSSLRNRPLPHDLLVFGEVGLSGEVRPVPSGQERLKEAGKHGFKRAIVPLGNAPKEAPAGLQVIAVTRLEQALDALFE.

The C4-type zinc-finger motif lies at 10 to 27 (CTECGATFPKWAGQCADC). ATP is bound at residue 96-103 (GDPGIGKS). The RadA KNRFG motif motif lies at 252–256 (KNRFG). The interval 351–453 (DVFLNVVGGV…LEQALDALFE (103 aa)) is lon-protease-like.

This sequence belongs to the RecA family. RadA subfamily.

In terms of biological role, DNA-dependent ATPase involved in processing of recombination intermediates, plays a role in repairing DNA breaks. Stimulates the branch migration of RecA-mediated strand transfer reactions, allowing the 3' invading strand to extend heteroduplex DNA faster. Binds ssDNA in the presence of ADP but not other nucleotides, has ATPase activity that is stimulated by ssDNA and various branched DNA structures, but inhibited by SSB. Does not have RecA's homology-searching function. The protein is DNA repair protein RadA of Pseudomonas aeruginosa (strain ATCC 15692 / DSM 22644 / CIP 104116 / JCM 14847 / LMG 12228 / 1C / PRS 101 / PAO1).